We begin with the raw amino-acid sequence, 258 residues long: Snake venom serine protease (258 aa).

The first 18 residues, 1-18 (MVLIRVLANLLILQLSYA), serve as a signal peptide directing secretion. Residues 19 to 24 (QKSSEL) constitute a propeptide that is removed on maturation. A Peptidase S1 domain is found at 25 to 249 (VIGGDECNIN…YTEWIQSILA (225 aa)). 6 disulfide bridges follow: cysteine 31-cysteine 163, cysteine 50-cysteine 66, cysteine 98-cysteine 256, cysteine 142-cysteine 210, cysteine 174-cysteine 189, and cysteine 200-cysteine 225. Active-site charge relay system residues include histidine 65 and aspartate 110. N-linked (GlcNAc...) asparagine glycosylation occurs at asparagine 154. Serine 204 (charge relay system) is an active-site residue.

The protein belongs to the peptidase S1 family. Snake venom subfamily. In terms of assembly, monomer. Expressed by the venom gland.

The protein localises to the secreted. Its function is as follows. Snake venom serine protease that may act in the hemostasis system of the prey. This Lachesis stenophrys (Central American bushmaster) protein is Snake venom serine protease.